The primary structure comprises 540 residues: Coiled-coil domain-containing protein 116 (540 aa).

Positions 79 to 102 (QVLDSLQTVVEQATECVATMKTEA) form a coiled coil. The tract at residues 347-400 (PGNSDLQPSSKASLPTDREARGETCYSPTSASSPKTSHRKSKDRRGSPSNAVQM) is disordered. 2 stretches are compositionally biased toward polar residues: residues 350 to 359 (SDLQPSSKAS) and 372 to 381 (YSPTSASSPK). Serine 393 carries the phosphoserine modification.

The protein localises to the cytoplasm. The protein resides in the cytoskeleton. It localises to the microtubule organizing center. Its subcellular location is the centrosome. The protein is Coiled-coil domain-containing protein 116 (Ccdc116) of Rattus norvegicus (Rat).